The following is a 262-amino-acid chain: MFINLNPLEQFSVYSATSAILGSSSNSLAITSLTNIAILFIIGLLVLTIFQISASSHLIKPTRWNIVLETWVASILGIVKDQIGNDAKNSLIYFPLIFTFFSFVFISNILGMIPYSFTPTSHISVTLGLSIAIMIGVTLIGFSKHQLDFFSLFVPKGTPLALVPLLVLIEFISYSARAFSLALRLTANVSAGHCLFGVISMLSVSACMAVSSILLKGITIGLPLAVLVVLYGLELLVALLQSYVFTLLTCSYLADIVNMGDH.

The next 7 membrane-spanning stretches (helical) occupy residues 30 to 50 (ITSLTNIAILFIIGLLVLTIF), 64 to 84 (WNIVLETWVASILGIVKDQIG), 91 to 111 (LIYFPLIFTFFSFVFISNILG), 123 to 143 (ISVTLGLSIAIMIGVTLIGFS), 149 to 169 (FFSLFVPKGTPLALVPLLVLI), 195 to 215 (LFGVISMLSVSACMAVSSILL), and 220 to 240 (IGLPLAVLVVLYGLELLVALL).

The protein belongs to the ATPase A chain family. As to quaternary structure, F-type ATPases have 2 components, CF(1) - the catalytic core - and CF(0) - the membrane proton channel. CF(1) has five subunits: alpha(3), beta(3), gamma(1), delta(1), epsilon(1). CF(0) has three main subunits: a, b and c.

Its subcellular location is the mitochondrion inner membrane. Its function is as follows. Mitochondrial membrane ATP synthase (F(1)F(0) ATP synthase or Complex V) produces ATP from ADP in the presence of a proton gradient across the membrane which is generated by electron transport complexes of the respiratory chain. F-type ATPases consist of two structural domains, F(1) - containing the extramembraneous catalytic core and F(0) - containing the membrane proton channel, linked together by a central stalk and a peripheral stalk. During catalysis, ATP synthesis in the catalytic domain of F(1) is coupled via a rotary mechanism of the central stalk subunits to proton translocation. Key component of the proton channel; it may play a direct role in the translocation of protons across the membrane. This Allomyces arbusculus (Aquatic fungus) protein is ATP synthase subunit a (ATP6).